The following is a 275-amino-acid chain: 4-hydroxy-tetrahydrodipicolinate reductase (275 aa).

NAD(+) is bound by residues 13–18, 108–110, and 134–137; these read GAAGKM, GTT, and VPNF. The Proton donor/acceptor role is filled by histidine 164. Histidine 165 lines the (S)-2,3,4,5-tetrahydrodipicolinate pocket. Catalysis depends on lysine 168, which acts as the Proton donor. Position 174–175 (174–175) interacts with (S)-2,3,4,5-tetrahydrodipicolinate; the sequence is GT.

The protein belongs to the DapB family.

It localises to the cytoplasm. It catalyses the reaction (S)-2,3,4,5-tetrahydrodipicolinate + NAD(+) + H2O = (2S,4S)-4-hydroxy-2,3,4,5-tetrahydrodipicolinate + NADH + H(+). The enzyme catalyses (S)-2,3,4,5-tetrahydrodipicolinate + NADP(+) + H2O = (2S,4S)-4-hydroxy-2,3,4,5-tetrahydrodipicolinate + NADPH + H(+). The protein operates within amino-acid biosynthesis; L-lysine biosynthesis via DAP pathway; (S)-tetrahydrodipicolinate from L-aspartate: step 4/4. In terms of biological role, catalyzes the conversion of 4-hydroxy-tetrahydrodipicolinate (HTPA) to tetrahydrodipicolinate. In Gloeothece citriformis (strain PCC 7424) (Cyanothece sp. (strain PCC 7424)), this protein is 4-hydroxy-tetrahydrodipicolinate reductase.